A 343-amino-acid polypeptide reads, in one-letter code: Putative kinase HI_0665 (343 aa).

Residue Asp209 is the Proton acceptor of the active site.

It belongs to the HipA Ser/Thr kinase family.

The sequence is that of Putative kinase HI_0665 from Haemophilus influenzae (strain ATCC 51907 / DSM 11121 / KW20 / Rd).